A 695-amino-acid chain; its full sequence is Protein-glutamine gamma-glutamyltransferase 2 (695 aa).

Catalysis depends on residues Cys272, His332, and Asp355. Asn395, Asp397, Glu434, Glu444, and Glu449 together coordinate Ca(2+). GTP contacts are provided by residues 476–482 (SIKHAQP) and 578–581 (ANIP).

It belongs to the transglutaminase superfamily. Transglutaminase family. Monomer. It depends on Ca(2+) as a cofactor.

Its subcellular location is the cytoplasm. The protein resides in the cytosol. It is found in the nucleus. It localises to the chromosome. The protein localises to the secreted. Its subcellular location is the extracellular space. The protein resides in the extracellular matrix. It is found in the cell membrane. It localises to the mitochondrion. The enzyme catalyses L-glutaminyl-[protein] + L-lysyl-[protein] = [protein]-L-lysyl-N(6)-5-L-glutamyl-[protein] + NH4(+). It catalyses the reaction L-glutaminyl-[protein] + serotonin = 5-serotonyl-L-glutamyl-[protein] + NH4(+). The catalysed reaction is L-glutaminyl-[protein] + dopamine = 5-dopaminyl-L-glutamyl-[protein] + NH4(+). It carries out the reaction L-glutaminyl-[protein] + histamine = 5-histaminyl-L-glutamyl-[protein] + NH4(+). The enzyme catalyses L-glutaminyl-[protein] + (R)-noradrenaline = 5-(R)-noradrenalinyl-L-glutamyl-[protein] + NH4(+). It catalyses the reaction L-glutaminyl-[protein] + H2O = L-glutamyl-[protein] + NH4(+). Its activity is regulated as follows. Acyltransferase activity is regulated by the binding of GTP and Ca(2+): inactivated by GTP, which stabilizes its closed structure, thereby obstructing the accessibility of substrates to the active sites. In contrast, Ca(2+) acts as a cofactor by inducing conformational change to the active open form. In absence of Ca(2+), Mg(2+) may bind Ca(2+)-binding sites, promoting GTP-binding and subsequent inhibition of the acyltransferase activity. Functionally, calcium-dependent acyltransferase that catalyzes the formation of covalent bonds between peptide-bound glutamine and various primary amines, such as gamma-amino group of peptide-bound lysine, or mono- and polyamines, thereby producing cross-linked or aminated proteins, respectively. Involved in many biological processes, such as bone development, angiogenesis, wound healing, cellular differentiation, chromatin modification and apoptosis. Acts as a protein-glutamine gamma-glutamyltransferase by mediating the cross-linking of proteins: under physiological conditions, the protein cross-linking activity is inhibited by GTP; inhibition is relieved by Ca(2+) in response to various stresses. When secreted, catalyzes cross-linking of proteins of the extracellular matrix, resulting in the formation of scaffolds. Plays a key role during apoptosis, both by (1) promoting the cross-linking of cytoskeletal proteins resulting in condensation of the cytoplasm, and by (2) mediating cross-linking proteins of the extracellular matrix, resulting in the irreversible formation of scaffolds that stabilize the integrity of the dying cells before their clearance by phagocytosis, thereby preventing the leakage of harmful intracellular components. In addition to protein cross-linking, can use different monoamine substrates to catalyze a vast array of protein post-translational modifications: mediates aminylation of serotonin, dopamine, noradrenaline or histamine into glutamine residues of target proteins to generate protein serotonylation, dopaminylation, noradrenalinylation or histaminylation, respectively. Mediates protein serotonylation of small GTPases during activation and aggregation of platelets, leading to constitutive activation of these GTPases. Plays a key role in chromatin organization by mediating serotonylation and dopaminylation of histone H3. Catalyzes serotonylation of 'Gln-5' of histone H3 (H3Q5ser) during serotonergic neuron differentiation, thereby facilitating transcription. Acts as a mediator of neurotransmission-independent role of nuclear dopamine in ventral tegmental area (VTA) neurons: catalyzes dopaminylation of 'Gln-5' of histone H3 (H3Q5dop), thereby regulating relapse-related transcriptional plasticity in the reward system. Also acts as a protein deamidase by mediating the side chain deamidation of specific glutamine residues of proteins to glutamate. May also act as an isopeptidase cleaving the previously formed cross-links. Also able to participate in signaling pathways independently of its acyltransferase activity: acts as a signal transducer in alpha-1 adrenergic receptor-mediated stimulation of phospholipase C-delta (PLCD) activity and is required for coupling alpha-1 adrenergic agonists to the stimulation of phosphoinositide lipid metabolism. The sequence is that of Protein-glutamine gamma-glutamyltransferase 2 from Pagrus major (Red sea bream).